Consider the following 103-residue polypeptide: Leukocyte cysteine proteinase inhibitor 1 (103 aa).

The residue at position 1 (Met-1) is a Blocked amino end (Met); partial. Positions Met-1–Glu-20 are disordered. Residues Gln-51–Gly-55 carry the Secondary area of contact motif.

Belongs to the cystatin family.

It is found in the cytoplasm. In terms of biological role, potent inhibitor of cathepsins L and S, and papain. This is Leukocyte cysteine proteinase inhibitor 1 from Sus scrofa (Pig).